Consider the following 347-residue polypeptide: uncharacterized protein (347 aa).

This is an uncharacterized protein from Mycoplasma genitalium (strain ATCC 33530 / DSM 19775 / NCTC 10195 / G37) (Mycoplasmoides genitalium).